The following is a 740-amino-acid chain: Cell death abnormality protein 12 (740 aa).

An ELMO domain is found at 348–494 (SEIQKVLDID…FVLEQLRHVL (147 aa)). The interval 555–690 (INHLNYLKKG…ESLAYLVGNT (136 aa)) is required for punctate localization, cell corpse engulfment and distal cell tip migration. The SH3-binding motif lies at 724–727 (PDVP).

Interacts with psr-1. Forms a ternary complex with ced-2 and ced-5.

It is found in the cytoplasm. In terms of biological role, involved in apoptosis and necrosis. Required for the cell corpse engulfment process. Has roles in the formation of actin halos and distal tip cell migration. Plays no role in amphid axon outgrowth. This Caenorhabditis briggsae protein is Cell death abnormality protein 12.